The sequence spans 131 residues: Squamosa promoter-binding protein 1 (131 aa).

Positions 1-10 (MDTSKGEGKR) are enriched in basic and acidic residues. A disordered region spans residues 1–52 (MDTSKGEGKRVIKLPGSQEQGEEEDDIGEDSKKTRALTPSGKRASGSTQRSC). The SBP-type zinc-finger motif lies at 49–126 (QRSCQVENCA…AGHNERRRKS (78 aa)). Zn(2+) contacts are provided by Cys-52, Cys-57, Cys-74, His-77, Cys-93, Cys-96, His-100, and Cys-112. A Bipartite nuclear localization signal motif is present at residues 109–125 (KRSCRRRLAGHNERRRK).

It is found in the nucleus. Probable transcriptional factor. Binds to the promoter of the SQUAMOSA gene. This chain is Squamosa promoter-binding protein 1 (SBP1), found in Antirrhinum majus (Garden snapdragon).